The chain runs to 314 residues: Aromatic prenyltransferase (314 aa).

The protein belongs to the aromatic prenyltransferase family.

Prenyltransferase that attaches isoprenoid moieties to carbon atoms of aromatic substrates in an enzyme-catalyzed Friedel-Crafts reaction. This is Aromatic prenyltransferase from Arthroderma otae (strain ATCC MYA-4605 / CBS 113480) (Microsporum canis).